The chain runs to 227 residues: Isopentenyl-diphosphate Delta-isomerase 1 (227 aa).

A substrate-binding site is contributed by Lys-36. Mg(2+)-binding residues include His-40 and His-51. In terms of domain architecture, Nudix hydrolase spans 49-199; it reads LLHRAFSVFL…EIKITPWFQI (151 aa). Substrate-binding residues include Arg-70 and Lys-74. Cys-86 acts as the Proton acceptor in catalysis. Ser-87 lines the substrate pocket. Residues Glu-146 and Glu-148 each contribute to the Mg(2+) site. The active site involves Glu-148. At Lys-176 the chain carries N6-acetyllysine.

The protein belongs to the IPP isomerase type 1 family. As to quaternary structure, monomer. Mg(2+) serves as cofactor.

The protein resides in the peroxisome. The enzyme catalyses isopentenyl diphosphate = dimethylallyl diphosphate. The protein operates within isoprenoid biosynthesis; dimethylallyl diphosphate biosynthesis; dimethylallyl diphosphate from isopentenyl diphosphate: step 1/1. In terms of biological role, catalyzes the 1,3-allylic rearrangement of the homoallylic substrate isopentenyl (IPP) to its highly electrophilic allylic isomer, dimethylallyl diphosphate (DMAPP). In Bos taurus (Bovine), this protein is Isopentenyl-diphosphate Delta-isomerase 1 (IDI1).